An 816-amino-acid chain; its full sequence is uncharacterized protein (816 aa).

Disordered stretches follow at residues 1 to 81 (MDVV…NSNN) and 391 to 411 (LGSNSSTNENDSNDHDSNNDF). Over residues 28-44 (EVPPQRPRQQNRWKPWW) the composition is skewed to low complexity. Over residues 64-81 (QGRSSPTTDFQDSVNSNN) the composition is skewed to polar residues. Phosphoserine is present on residues Ser-76 and Ser-79. The segment covering 391–400 (LGSNSSTNEN) has biased composition (low complexity).

This is an uncharacterized protein from Saccharomyces cerevisiae (strain ATCC 204508 / S288c) (Baker's yeast).